Here is a 485-residue protein sequence, read N- to C-terminus: Alpha,alpha-trehalose-phosphate synthase [UDP-forming] (485 aa).

2 residues coordinate D-glucose 6-phosphate: Tyr-99 and Asp-153. UDP is bound by residues Arg-290 and Lys-295. UDP-alpha-D-glucose is bound by residues Arg-290 and Lys-295. Arg-328 serves as a coordination point for D-glucose 6-phosphate. UDP is bound by residues Ile-367 and 393–397 (LVSYE). Residues Ile-367 and 389–397 (DGMNLVSYE) each bind UDP-alpha-D-glucose.

It belongs to the glycosyltransferase 20 family.

The enzyme catalyses D-glucose 6-phosphate + UDP-alpha-D-glucose = alpha,alpha-trehalose 6-phosphate + UDP + H(+). The protein operates within carbohydrate biosynthesis. Synthase catalytic subunit of the trehalose synthase complex that catalyzes the production of trehalose from glucose-6-phosphate and UDP-alpha-D-glucose in a two step process. This chain is Alpha,alpha-trehalose-phosphate synthase [UDP-forming], found in Zygosaccharomyces rouxii.